The chain runs to 443 residues: Glucose-6-phosphate isomerase (443 aa).

Glutamate 285 functions as the Proton donor in the catalytic mechanism. Catalysis depends on residues histidine 306 and lysine 420.

This sequence belongs to the GPI family.

Its subcellular location is the cytoplasm. It catalyses the reaction alpha-D-glucose 6-phosphate = beta-D-fructose 6-phosphate. Its pathway is carbohydrate biosynthesis; gluconeogenesis. It functions in the pathway carbohydrate degradation; glycolysis; D-glyceraldehyde 3-phosphate and glycerone phosphate from D-glucose: step 2/4. Its function is as follows. Catalyzes the reversible isomerization of glucose-6-phosphate to fructose-6-phosphate. This is Glucose-6-phosphate isomerase from Staphylococcus aureus (strain NCTC 8325 / PS 47).